Here is a 161-residue protein sequence, read N- to C-terminus: Putative acetyltransferase SAR0816 (161 aa).

Belongs to the transferase hexapeptide repeat family.

This is Putative acetyltransferase SAR0816 from Staphylococcus aureus (strain MRSA252).